We begin with the raw amino-acid sequence, 468 residues long: Sorting and assembly machinery component 50 homolog (468 aa).

Residues 1 to 24 are disordered; it reads MGTVHARSLDPLPMNGPDFGSHDD. The region spanning 44 to 124 is the POTRA domain; sequence VVVQRVHFEG…LDVTFEVTEL (81 aa).

It belongs to the SAM50/omp85 family. Associates with the mitochondrial contact site and cristae organizing system (MICOS) complex (also known as MINOS or MitOS complex).

The protein localises to the mitochondrion outer membrane. Its function is as follows. May play a role in the maintenance of the structure of mitochondrial cristae. The chain is Sorting and assembly machinery component 50 homolog (samm50) from Xenopus tropicalis (Western clawed frog).